Consider the following 450-residue polypeptide: UDP-N-acetylmuramoylalanine--D-glutamate ligase (450 aa).

119–125 (GTNGKTT) contacts ATP.

Belongs to the MurCDEF family.

The protein localises to the cytoplasm. The enzyme catalyses UDP-N-acetyl-alpha-D-muramoyl-L-alanine + D-glutamate + ATP = UDP-N-acetyl-alpha-D-muramoyl-L-alanyl-D-glutamate + ADP + phosphate + H(+). It functions in the pathway cell wall biogenesis; peptidoglycan biosynthesis. In terms of biological role, cell wall formation. Catalyzes the addition of glutamate to the nucleotide precursor UDP-N-acetylmuramoyl-L-alanine (UMA). The protein is UDP-N-acetylmuramoylalanine--D-glutamate ligase of Lactococcus lactis subsp. lactis (strain IL1403) (Streptococcus lactis).